The sequence spans 1939 residues: MSSDQEMAIFGEAAPYLRKSEKERIEAQNRPFDAKTSVFVAEPKESFVKGTVQSREGGKVTVKTEAGATLTVKEDQVFPMNPPKYDKIEDMAMMTHLHEPAVLYNLKERYAAWMIYTYSGLFCVTVNPYKWLPVYNAEVVTAYRGKKRQEAPPHIFSISDNAYQFMLTDRENQSILITGESGAGKTVNTKRVIQYFATIAVTGDKKKEEVTSGKIQGTLEDQIISANPLLEAFGNAKTVRNDNSSRFGKFIRIHFGTTGKLASADIETYLLEKSRVTFQLKAERSYHIFYQIMSNKKPDLIEMLLITTNPYDYAFVSQGEITVPSIDDQEELIATDSAIDILGFTSDERVSIYKLTGAVMHYGNMKFKQKQREEQAEPDGTEVADKAAYLQSLNSADLLKALCYPRVKVGNEFVTKGQTVQQVYNAVGALAKAVYEKMFLWMVTRINQQLDTKQPRQYFIGVLDIAGFEIFDFNSLEQLCINFTNEKLQQFFNHHMFVLEQEEYKKEGIEWEFIDFGMDLAACIELIEKPMGIFSILEEECMFPKATDTSFKNKLYEQHLGKSNNFQKPKPAKGKVEAHFSLIHYAGTVDYNIGGWLDKNKDPLNETVVGLYQKSAMKTLANLFSGATAAEAEAGGGKKGGKKKGSSFQTVSALFRENLNKLMTNLRSTHPHFVRCIIPNETKTPGAMEHELVLHQLRCNGVLEGIRICRKGFPSRILYADFKQRYKVLNASAIPEGQFIDSKKASEKLLGSIDVDHTQYKFGHTKVFFKAGLLGLLEEMRDDKLAQLITRTQARCRGFLARVEYQKMVERRESIFCIQYNIRAFMNVKHWPWMKLYFKIKPLLKSAETEKEMANMKEEFEKTKESLAKAEAKRKELEEKMVALMQEKNDLQLQVQAEADSLADAEERCDQLIKTKIQLEAKIKEVTERAEDEEEINAELTAKKRKLEDECSELKKDIDDLELTLAKVEKEKHATENKVKNLTEEMAGLDETIAKLTKEKKALQEAHQQTLDDLQAEEDKVNTLTKAKIKLEQQVDDLEGSLEQEKKIRMDLERAKRKLEGDLKLAQESTMDIENDKQQLDEKLKKKEFEMSNLQSKIEDEQALAMQLQKKIKELQARIEELEEEIEAERASRAKAEKQRSDLSRELEEISERLEEAGGATSAQIEMNKKREAEFQKMRRDLEEATLQHEATAATLRKKHADSVAELGEQIDNLQRVKQKLEKEKSEMKMEIDDLASNMETVSKAKGNLEKMCRTLEDQVSELKTKEEEQQRLINDLTAQRARLQTESGEYSRQLDEKDSLVSQLSRGKLAFTQQIEELKRQLEEEIKAKSALAHALQSARHDCDLLREQYEEEQEGKAELQRAMSKANSEVAQWRTKYETDAIQRTEELEEAKKKLAQRLQDAEEHVEAVNAKCASLEKTKQRLQNEVEDLMIDVERTNAACAALDKKQRNFDKILAEWKQKYEETHAELEASQKESRSLSTELFKIKNAYEESLDQLETLKRENKNLQQEISDLTEQIAEGGKRIHELEKIKKQVEQEKTELQAALEEAEASLEHEEGKILRIQLELNQVKSEIDRKIAEKDEEIDQLKRNHIRVVESMQSTLDAEIRSRNDAIRLKKKMEGDLNEMEIQLNHANRMAAEALRNYRNTQGILKDTQIHLDDALRGQEDLKEQLAMVERRANLLQAEIEELRATLEQTERSRKIAEQELLDASERVQLLHTQNTSLINTKKKLETDISQIQGEMEDIIQEARNAEEKAKKAITDAAMMAEELKKEQDTSAHLERMKKNMEQTVKDLQHRLDEAEQLALKGGKKQIQKLEARVRELEGEVESEQKHNIETVKSLRKHERRVKELTYQTEEDRKNVLRLQDLVDKLQAKVKAYKRQAEEAEEQSNVNLSKFRKLQHELEEAEERADIAESQVNKLRVKSREVHTKIISEE.

The Myosin N-terminal SH3-like domain occupies 33–82 (DAKTSVFVAEPKESFVKGTVQSREGGKVTVKTEAGATLTVKEDQVFPMNP). Phosphothreonine is present on residues T64 and T69. Residues 86 to 782 (DKIEDMAMMT…LLGLLEEMRD (697 aa)) enclose the Myosin motor domain. N6,N6,N6-trimethyllysine is present on K130. 179 to 186 (GESGAGKT) contacts ATP. Y389 is modified (phosphotyrosine). Residue S392 is modified to Phosphoserine. T419 is modified (phosphothreonine). At Y424 the chain carries Phosphotyrosine. S625 carries the phosphoserine modification. The interval 659 to 681 (LNKLMTNLRSTHPHFVRCIIPNE) is actin-binding. H757 bears the Pros-methylhistidine mark. The actin-binding stretch occupies residues 761-775 (KFGHTKVFFKAGLLG). The IQ domain maps to 785 to 814 (LAQLITRTQARCRGFLARVEYQKMVERRES). A coiled-coil region spans residues 843–1939 (LLKSAETEKE…EVHTKIISEE (1097 aa)). 2 positions are modified to phosphoserine: S1092 and S1096. Disordered stretches follow at residues 1125-1147 (EIEA…SREL) and 1153-1172 (RLEE…KKRE). Residues 1128 to 1147 (AERASRAKAEKQRSDLSREL) are compositionally biased toward basic and acidic residues. S1162 and S1237 each carry phosphoserine. T1241 bears the Phosphothreonine mark. The residue at position 1243 (S1243) is a Phosphoserine. T1255 carries the post-translational modification Phosphothreonine. The residue at position 1261 (S1261) is a Phosphoserine. T1265 and T1286 each carry phosphothreonine. Residues S1288, S1292, S1303, and S1306 each carry the phosphoserine modification. Y1464 carries the post-translational modification Phosphotyrosine. T1467 carries the phosphothreonine modification. S1474 bears the Phosphoserine mark. Y1492 bears the Phosphotyrosine mark. The residue at position 1495 (S1495) is a Phosphoserine. T1501 bears the Phosphothreonine mark. At S1514 the chain carries Phosphoserine. T1517 carries the phosphothreonine modification. 6 positions are modified to phosphoserine: S1554, S1574, S1600, S1603, S1714, and S1726. 2 positions are modified to phosphothreonine: T1730 and T1736. At S1739 the chain carries Phosphoserine.

It belongs to the TRAFAC class myosin-kinesin ATPase superfamily. Myosin family. In terms of assembly, muscle myosin is a hexameric protein that consists of 2 heavy chain subunits (MHC), 2 alkali light chain subunits (MLC) and 2 regulatory light chain subunits (MLC-2). Interacts with SLC26A5.

It is found in the cytoplasm. Its subcellular location is the myofibril. In terms of biological role, required for normal hearing. It plays a role in cochlear amplification of auditory stimuli, likely through the positive regulation of prestin (SLC26A5) activity and outer hair cell (OHC) electromotility. This Canis lupus familiaris (Dog) protein is Myosin-1 (MYH1).